We begin with the raw amino-acid sequence, 110 residues long: Progonadoliberin-2 (110 aa).

Residues 1–26 form the signal peptide; it reads MASIGQGLVLLLLLLLLTAQPGPLKA. The tract at residues 25 to 85 is disordered; it reads KAQHWSHGWY…KALAPPEDTV (61 aa). G36 bears the Glycine amide mark.

This sequence belongs to the GnRH family. As to expression, midbrain.

The protein resides in the secreted. Stimulates the secretion of gonadotropins; it stimulates the secretion of both luteinizing and follicle-stimulating hormones. The protein is Progonadoliberin-2 (GNRH2) of Suncus murinus (Asian house shrew).